A 541-amino-acid polypeptide reads, in one-letter code: Nectin 1b (541 aa).

The signal sequence occupies residues 1-21; sequence MDKQESFFVGHKSHRCSQNRS. Over 22-396 the chain is Extracellular; it reads VSQIHQRTSR…PAELHSSGAA (375 aa). Asparagine 51, asparagine 105, asparagine 180, asparagine 242, asparagine 326, asparagine 337, and asparagine 372 each carry an N-linked (GlcNAc...) asparagine glycan. The Ig-like V-type domain maps to 77 to 182; the sequence is GDTVELKCLF…GNRENMVNLT (106 aa). Cysteines 84 and 165 form a disulfide. Ig-like C2-type domains follow at residues 187 to 282 and 287 to 374; these read PVTK…VILN and PEVK…VNVT. 2 cysteine pairs are disulfide-bonded: cysteine 212–cysteine 266 and cysteine 309–cysteine 356. The helical transmembrane segment at 397-417 threads the bilayer; sequence IGGAVGGVALLVAAIALLVFF. Residues 418–541 are Cytoplasmic-facing; the sequence is LRRRQRTFKG…SVISKKEWYV (124 aa). Residues 440 to 507 are disordered; it reads YSKAGGMPAH…VDEGESRDYD (68 aa). Residues 479–493 show a composition bias toward basic and acidic residues; the sequence is SGDRDFDGNSEDLKR.

It belongs to the nectin family. Cis- and trans-homodimer. Can form trans-heterodimers. Expressed in the developing eye and nervous system.

It localises to the cell membrane. It is found in the cell junction. Its subcellular location is the adherens junction. In terms of biological role, cell adhesion molecule that promotes cell-cell contacts and plays important roles in the development of the nervous system. Acts by forming homophilic or heterophilic trans-dimers. This Danio rerio (Zebrafish) protein is Nectin 1b.